The primary structure comprises 1294 residues: Ethylene-insensitive protein 2 (1294 aa).

At 1–12 the chain is on the cytoplasmic side; that stretch reads MEAEIVNVRPQL. A helical transmembrane segment spans residues 13–33; that stretch reads GFIQRMVPALLPVLLVSVGYI. Over 34-50 the chain is Extracellular; that stretch reads DPGKWVANIEGGARFGY. A helical membrane pass occupies residues 51–71; it reads DLVAITLLFNFAAILCQYVAA. The Cytoplasmic segment spans residues 72–105; that stretch reads RISVVTGKHLAQICNEEYDKWTCMFLGIQAEFSA. A helical transmembrane segment spans residues 106–126; sequence ILLDLTMVVGVAHALNLLFGV. A topological domain (extracellular) is located at residue E127. Residues 128–148 form a helical membrane-spanning segment; sequence LSTGVFLAAMDAFLFPVFASF. The Cytoplasmic portion of the chain corresponds to 149–155; sequence LENGMAN. The helical transmembrane segment at 156–176 threads the bilayer; the sequence is TVSIYSAGLVLLLYVSGVLLS. Over 177-194 the chain is Extracellular; sequence QSEIPLSMNGVLTRLNGE. A helical transmembrane segment spans residues 195-215; it reads SAFALMGLLGASIVPHNFYIH. Residues 216-237 are Cytoplasmic-facing; sequence SYFAGESTSSSDVDKSSLCQDH. A helical membrane pass occupies residues 238–258; the sequence is LFAIFGVFSGLSLVNYVLMNA. The Extracellular portion of the chain corresponds to 259–287; that stretch reads AANVFHSTGLVVLTFHDALSLMEQVFMSP. The helical transmembrane segment at 288–308 threads the bilayer; the sequence is LIPVVFLMLLFFSSQITALAW. Residues 309–334 lie on the Cytoplasmic side of the membrane; the sequence is AFGGEVVLHDFLKIEIPAWLHRATIR. A run of 2 helical transmembrane segments spans residues 335–355 and 356–376; these read ILAVAPALYCVWTSGADGIYQ and LLIFTQVLVAMMLPCSVIPLF. Residues 377–397 are Cytoplasmic-facing; it reads RIASSRQIMGVHKIPQVGEFL. The chain crosses the membrane as a helical span at residues 398 to 418; it reads ALTTFLGFLGLNVVFVVEMVF. Residues 419–440 lie on the Extracellular side of the membrane; it reads GSSDWAGGLRWNTVMGTSIQYT. Residues 441–461 form a helical membrane-spanning segment; the sequence is TLLVSSCASLCLILWLAATPL. The Cytoplasmic segment spans residues 462–1294; it reads KSASNRAEAQ…KNVTAYGSLG (833 aa). 2 disordered regions span residues 534-561 and 623-662; these read TDQEIRSSPPEERELDVKYSTSQVSSLK and ETEEATKAAPTSNFTVGSDGPPSFRSLSGEGGSGTGSLSR. Residues 536–550 show a composition bias toward basic and acidic residues; that stretch reads QEIRSSPPEERELDV. 3 positions are modified to phosphoserine: S645, S659, and S757. At T819 the chain carries Phosphothreonine. S924 carries the phosphoserine modification. The Nuclear localization signal signature appears at 1262 to 1269; the sequence is LKRYKRRL. Residues 1269-1294 form a disordered region; sequence LSNKPVGMNQDGPGSRKNVTAYGSLG. S1283 is subject to Phosphoserine.

It belongs to the NRAMP (TC 2.A.55) family. As to quaternary structure, interacts (via NLS) with ETR1. Interacts (via C-terminus) with EER5 and the COP9 signalosome subunits CSN3, CSN6A and CSN6B. Interacts with ETP1 and ETP2. Interacts with CTR1. Interacts with all members of the ethylene receptor family, including ETR1, ETR2, ERS1, ERS2 and EIN4. Binds to MRF3/ECIP1. Interacts with several P-body components, such as XRN4/EIN5, PAB2, PAB4 and PAB8. Binds to ENAP1 in the presence of ethylene; this reaction facilitates its association with histone. Post-translationally, phosphorylated by CTR1 on at least 4 sites. Phosphorylation of Ser-645 and Ser-924 is involved in repressing EIN2 signaling. Loss of phosphorylation results in nuclear localization of the C-terminus of EIN2. Localized to the guard cells after methyl jasmonate treatment.

Its subcellular location is the endoplasmic reticulum membrane. The protein resides in the nucleus. It localises to the cytoplasm. Functionally, central factor in signaling pathways regulated by ethylene (ET) and involved in various processes including development, plant defense, senescence, nucleotide sugar flux, and tropisms. Necessary for ethylene-mediated gene regulation, and for the induction of some genes by ozone. Acts downstream of ET receptors, and upstream of ethylene regulated transcription factors. Required for cytokinin-mediated processes. Seems to be implicated in cross-talk between ET, jasmonate and other pathways. Probably not involved in iron uptake. Has a short half-life and undergoes rapid proteasome-mediated turnover in the absence of ethylene. Required for ethylene-induced EIN3 stabilization via proteasomal degradation of EBF1/EBF2 proteins. Regulates the leaf senescence induced by methyl jasmonate, ethylene and abscisic acid. Required during salt stress to confer resistance. Trafficking signal inducing ethylene response. The nuclear localization is both necessary and sufficient to activate EIN3-mediated transcription and ethylene responses. Involved in ethylene (ET)-mediated signaling pathways by triggering histone acetylation of H3K14 and H3K23 in an ENAP1-dependent manner, thus influencing the expression of ethylene-responsive genes. Necessary and sufficient for 3'-UTR-mediated translational repression of EBF1 and EBF2 mRNAs. Ethylene induces EIN2-CEND to associate with 3' UTRs in cytoplasmic foci and target EBF1/2 mRNAs to cytoplasmic processing-body (P-body). MPK6 regulates the cleavage and nuclear translocation of EIN2-CEND under methyl jasmonate treatment. Required for EIN3 accumulation. This chain is Ethylene-insensitive protein 2, found in Arabidopsis thaliana (Mouse-ear cress).